The chain runs to 169 residues: Ribosome maturation factor RimM (169 aa).

The PRC barrel domain occupies 95–169 (EDGYYWTDLI…QITVDWELGY (75 aa)).

The protein belongs to the RimM family. As to quaternary structure, binds ribosomal protein uS19.

It is found in the cytoplasm. Its function is as follows. An accessory protein needed during the final step in the assembly of 30S ribosomal subunit, possibly for assembly of the head region. Essential for efficient processing of 16S rRNA. May be needed both before and after RbfA during the maturation of 16S rRNA. It has affinity for free ribosomal 30S subunits but not for 70S ribosomes. The sequence is that of Ribosome maturation factor RimM from Nitrosomonas europaea (strain ATCC 19718 / CIP 103999 / KCTC 2705 / NBRC 14298).